We begin with the raw amino-acid sequence, 279 residues long: Shikimate dehydrogenase (NADP(+)) (279 aa).

Residues 19-21 (SRS) and threonine 66 each bind shikimate. Lysine 70 (proton acceptor) is an active-site residue. Residues asparagine 91 and aspartate 106 each coordinate shikimate. NADP(+) contacts are provided by residues 129 to 133 (GAGGA), 152 to 157 (NRTLER), and isoleucine 218. Tyrosine 220 contacts shikimate. Position 241 (glycine 241) interacts with NADP(+).

Belongs to the shikimate dehydrogenase family. Homodimer.

It catalyses the reaction shikimate + NADP(+) = 3-dehydroshikimate + NADPH + H(+). It functions in the pathway metabolic intermediate biosynthesis; chorismate biosynthesis; chorismate from D-erythrose 4-phosphate and phosphoenolpyruvate: step 4/7. Its function is as follows. Involved in the biosynthesis of the chorismate, which leads to the biosynthesis of aromatic amino acids. Catalyzes the reversible NADPH linked reduction of 3-dehydroshikimate (DHSA) to yield shikimate (SA). The polypeptide is Shikimate dehydrogenase (NADP(+)) (Gluconobacter oxydans (strain 621H) (Gluconobacter suboxydans)).